The chain runs to 669 residues: Diacylglycerol lipase-beta (669 aa).

Over 1–17 the chain is Cytoplasmic; it reads MPGMVLFGRRWSLASDD. A helical transmembrane segment spans residues 18-38; that stretch reads LVFPGSFELFLRVLWWIVSLT. The Extracellular portion of the chain corresponds to 39-58; that stretch reads LYLTHRRRLDCPGGVLLSTY. A helical transmembrane segment spans residues 59-79; sequence LIVLLVLLAVIICTVLAIVCV. The Cytoplasmic portion of the chain corresponds to 80–102; sequence SMRGTICNPGPRKSMSKLLYIRL. A helical membrane pass occupies residues 103–123; that stretch reads ALFLPEMVWASLGAAWVAKGI. The Extracellular segment spans residues 124-128; it reads QCDRT. The helical transmembrane segment at 129-149 threads the bilayer; that stretch reads VVIGIIATVIVSWIVIAATMV. Over 150–669 the chain is Cytoplasmic; that stretch reads TIIFVFDPLG…CPGQGGSSVP (520 aa). Catalysis depends on charge relay system residues Ser443 and Asp495. Ser570, Ser578, and Ser582 each carry phosphoserine.

This sequence belongs to the AB hydrolase superfamily. Lipase family. The cofactor is Ca(2+). As to expression, expressed in liver and immune cells such as macrophages and microglias. In embryonic brains present in axonal tracts, while in adults localizes to dendritic fields, correlating with the developmental change in requirement for 2-AG synthesis from the pre- to the postsynaptic compartment (at protein level).

It is found in the cell membrane. It catalyses the reaction a 1,2-diacyl-sn-glycerol + H2O = a 2-acylglycerol + a fatty acid + H(+). The enzyme catalyses 1-octadecanoyl-2-(5Z,8Z,11Z,14Z-eicosatetraenoyl)-sn-glycerol + H2O = 2-(5Z,8Z,11Z,14Z-eicosatetraenoyl)-glycerol + octadecanoate + H(+). The catalysed reaction is 1,2-di-(9Z-octadecenoyl)-sn-glycerol + H2O = 2-(9Z-octadecenoyl)-glycerol + (9Z)-octadecenoate + H(+). It carries out the reaction 1-(9Z-octadecenoyl)-2-(5Z,8Z,11Z,14Z-eicosatetraenoyl)-sn-glycerol + H2O = 2-(5Z,8Z,11Z,14Z-eicosatetraenoyl)-glycerol + (9Z)-octadecenoate + H(+). It catalyses the reaction 1-(9Z-octadecenoyl)-2-octadecanoyl-sn-glycerol + H2O = 2-octadecanoylglycerol + (9Z)-octadecenoate + H(+). The enzyme catalyses 1-(9Z-octadecenoyl)-2-(9Z,12Z-octadecadienoyl)-sn-glycerol + H2O = 2-(9Z,12Z-octadecadienoyl)-glycerol + (9Z)-octadecenoate + H(+). The catalysed reaction is 1-(9Z-octadecenoyl)-2-O-(5Z,8Z,11Z,14Z-eicosatetraenyl)-sn-glycerol + H2O = 2-O-(5Z,8Z,11Z,14Z)-eicosatetraenylglycerol + (9Z)-octadecenoate + H(+). It carries out the reaction a triacylglycerol + H2O = a diacylglycerol + a fatty acid + H(+). It catalyses the reaction 1,2,3-tri-(5Z,8Z,11Z,14Z-eicosatetraenoyl)-glycerol + H2O = 1,2-di-(5Z,8Z,11Z,14Z-eicosatetraenoyl)-glycerol + (5Z,8Z,11Z,14Z)-eicosatetraenoate + H(+). The enzyme catalyses 1,2,3-(4Z,7Z,10Z,13Z,16Z,19Z-docosahexaenoyl)-glycerol + H2O = 1,2-di-(4Z,7Z,10Z,13Z,16Z,19Z-docosahexaenoyl)-glycerol + (4Z,7Z,10Z,13Z,16Z,19Z)-docosahexaenoate + H(+). With respect to regulation, inhibited by the 1,2,3-triazole urea covalent inhibitors KT109 and KT172. Inhibited by p-hydroxy-mercuri-benzoate and HgCl(2), but not by PMSF. Also inhibited by RHC80267, a drug that blocks 2-AG formation. Lipase that catalyzes the hydrolysis of arachidonic acid (AA)-esterified diacylglycerols (DAGs) to produce the principal endocannabinoid, 2-arachidonoylglycerol (2-AG) which can be further cleaved by downstream enzymes to release arachidonic acid (AA) for cyclooxygenase (COX)-mediated eicosanoid production. Preferentially hydrolyzes DAGs at the sn-1 position in a calcium-dependent manner and has negligible activity against other lipids including monoacylglycerols and phospholipids. Plays a key role in the regulation of 2-AG and AA pools utilized by COX1/2 to generate lipid mediators of macrophage and microglia inflammatory responses. Also functions as a polyunsaturated fatty acids-specific triacylglycerol lipase in macrophages. Plays an important role to support the metabolic and signaling demands of macrophages. The polypeptide is Diacylglycerol lipase-beta (Daglb) (Mus musculus (Mouse)).